We begin with the raw amino-acid sequence, 793 residues long: 3',5'-cyclic-nucleotide phosphodiesterase regA (793 aa).

A disordered region spans residues 1–153; it reads MNNKQEEIDQ…SSHRVSDFSD (153 aa). 3 stretches are compositionally biased toward low complexity: residues 13 to 34, 54 to 69, and 80 to 121; these read SSTS…DSTS, NKNN…SNNN, and NNSS…NNNN. In terms of domain architecture, Response regulatory spans 161-280; it reads RILVADDDDV…LLKKKIDTVL (120 aa). 4-aspartylphosphate is present on aspartate 212. One can recognise a PDEase domain in the interval 410-733; that stretch reads RRNSIPTFPQ…ENWQAYMELQ (324 aa). The active-site Proton donor is the histidine 487. A divalent metal cation is bound by residues histidine 491, histidine 527, aspartate 528, and aspartate 639. The segment at 756–793 is disordered; sequence KLPKIDEEENRDKVSSSSSSSTAPLTSTSSSNNETSSS. Over residues 770-793 the composition is skewed to low complexity; sequence SSSSSSSTAPLTSTSSSNNETSSS.

Belongs to the cyclic nucleotide phosphodiesterase family. A divalent metal cation is required as a cofactor. In terms of processing, the phosphorelay mechanism involves the sequential transfer of a phosphate group from Asp-212 of pde2 to 'His-65' of rdeA. Phosphorylation of Asp-212 activates the phosphodiesterase domain.

Its subcellular location is the cytoplasm. The protein localises to the cytosol. It carries out the reaction 3',5'-cyclic AMP + H2O = AMP + H(+). Its activity is regulated as follows. Inhibited by 3-isobutyl-1-methylxanthine (IBMX). Phosphodiesterase specific for cAMP. Involved in the degradation of intracellular cAMP. Morphological suppressor of tagB. Phosphorelay protein that accepts phosphate from rdeA or supplies phosphate from regA; depending on the relative concentration of the phosphodonor proteins. In Dictyostelium discoideum (Social amoeba), this protein is 3',5'-cyclic-nucleotide phosphodiesterase regA (regA).